Consider the following 975-residue polypeptide: MFKRIVLAVINLVFLIVSTTAFASLHYPESFNQQLIRYKGRDSSNGYFELASEAYYTGTYDLVEELNETATCLRADCREQSNSSPVVRDRRRVDPTFYGHPKTREQIWERNFAHVIEDNRQTLSLVTLLNKIILKYLHSCIPIVLFDTYVATTENYMLEALFSDFPITYITGRIGPNYTLDNPGILEPTGPQCRSYIIFLADVMMTRKVIGPQMNSYVVLIPRSSQWKLQEFLAAKQSRDIINLLVIGESYSVDKRINNEQPYVLYTHELYIDGLGANRPQVLTSWIGNKFSRNNVNLFPRKLRKGFSGHRFTVKAAHQPPFMIKRLSTDGVGNVNIRWEGLEMRLLRVMAQYLNFTYDIIEPGRTELGPGDAVVEEIKRGQGDMGLAGIYVTIERNLATEMSVSHSTDCAAFLTLMSSALPRYRAILGPFQWPVWVAVILIYLLAIFPLAFSDKMTLRHLLGNWSEIENMFWYVFGTFTNSLTFQGENSWSNTRKTSTRMLIGIYWVFTIIITACYTGSIIAFITLPVEPERIDGIEQLSRGFFRVGTLDRGGWERWFLNSSHKQTNKLLKDLRFVSSVDEGIRNVTEAFLISYAFIGSKGELEFLIKSNLSHQFENKRYGLHVSRECFALYGVSMVFPPNSVHRDPINNAILYMQEAGLIGKLNRDVTWETMKTKDGRRKEASVGEVLRSTAPSERGLTLADTEGMFLLMLFGYVVALGVLISEWVGGCTNKCREVLKERAERLKAAAAEIAAAATAGSDNGSLPVSSPTSTNRNSPHKRTGPNGVENSLPASGNGSATVRRIRLTGEDSENEPNEYDVPPDAASDGGSSLQRHSLSECLSEVSAHTMQDLYNGPDRRHSTIVFLDGQLMSEEEAQRKVARSKSRHRHSLSSVLEREVSQLFRFLGKESPHSARADESSDAGGLVRRGAGRERKEMKVAVEINARATEEGQQGPGAAVGRRSIEATFGEKLLH.

The first 21 residues, 1–21, serve as a signal peptide directing secretion; it reads MFKRIVLAVINLVFLIVSTTA. N67, N177, and N355 each carry an N-linked (GlcNAc...) asparagine glycan. Residues 433–453 traverse the membrane as a helical segment; sequence WPVWVAVILIYLLAIFPLAFS. N464 carries N-linked (GlcNAc...) asparagine glycosylation. The chain crosses the membrane as a helical span at residues 505 to 525; that stretch reads IYWVFTIIITACYTGSIIAFI. Residues N561, N586, and N611 are each glycosylated (N-linked (GlcNAc...) asparagine). A helical transmembrane segment spans residues 708–728; it reads MFLLMLFGYVVALGVLISEWV. Disordered stretches follow at residues 757-839 and 911-938; these read ATAG…HSLS and SPHS…RKEM. Polar residues-rich tracts occupy residues 760–777 and 788–800; these read GSDN…TNRN and VENS…NGSA. 2 N-linked (GlcNAc...) asparagine glycosylation sites follow: N763 and N797.

The protein belongs to the glutamate-gated ion channel (TC 1.A.10.1) family. In both female and male antenna, expressed specifically in 3 sensory neurons of flagellomere 13 segment (at protein level).

The protein resides in the cell projection. The protein localises to the cilium membrane. Integral part of a neural sensory system in the antenna that provides the neural basis for the response to environmental changes in temperature (thermosensation). Specifically, required for thermosensing by the cooling cell. Plays a role in heat seeking and heat-stimulated blood feeding behavior. The sequence is that of Ionotropic receptor 21a from Anopheles gambiae (African malaria mosquito).